The chain runs to 1176 residues: Chromosome partition protein Smc (1176 aa).

32 to 39 (PNGCGKSN) provides a ligand contact to ATP. A coiled-coil region spans residues 169 to 506 (GVSRYKERRR…VKLQEDVQKQ (338 aa)). Positions 521–623 (LGRLWQKLHI…TAPDLGQALA (103 aa)) constitute an SMC hinge domain. 2 coiled-coil regions span residues 653–947 (DSEQ…LAAM) and 987–1024 (ERKE…LQAT).

Belongs to the SMC family. Homodimer.

Its subcellular location is the cytoplasm. In terms of biological role, required for chromosome condensation and partitioning. This Bordetella petrii (strain ATCC BAA-461 / DSM 12804 / CCUG 43448) protein is Chromosome partition protein Smc.